The primary structure comprises 263 residues: MLALRLLNVVAPAYFLCISLVTFVLQLFLFLPSMREDPAAARLFSPALLHGALFLFLSANALGNYVLVIQNSPDDLGACQGASARKTPCPSPSTHFCRVCARVTLRHDHHCFFTGNCIGSRNMRNFVLFCLYTSLACLYSMVAGVAYISAVLSISFAHPLAFLTLLPTSISQFFSGAVLGSEMFVILMLYLWFAIGLACAGFCCHQLLLILRGQTRHQVRKGVAVRARPWRKNLQEVFGKRWLLGLLVPMFNVGSESSKQQDK.

Residues M1 to V9 are Cytoplasmic-facing. The chain crosses the membrane as a helical span at residues V10–F30. Residues L31–L48 lie on the Lumenal side of the membrane. The chain crosses the membrane as a helical span at residues L49–I69. The Cytoplasmic segment spans residues Q70 to N125. The DHHC domain maps to P92 to L131. The active-site S-palmitoyl cysteine intermediate is C111. A run of 2 helical transmembrane segments spans residues F126–A146 and Y147–P167. The Cytoplasmic portion of the chain corresponds to T168–E182. A helical transmembrane segment spans residues M183 to C203. Over C204–K263 the chain is Lumenal.

The protein belongs to the DHHC palmitoyltransferase family. As to quaternary structure, interacts with CNN3. Widely expressed.

Its subcellular location is the endoplasmic reticulum membrane. It localises to the golgi apparatus membrane. It catalyses the reaction L-cysteinyl-[protein] + hexadecanoyl-CoA = S-hexadecanoyl-L-cysteinyl-[protein] + CoA. In terms of biological role, palmitoyltransferase that could catalyze the addition of palmitate onto various protein substrates and be involved in a variety of cellular processes. Catalyzes the palmitoylation of KCNMA1, regulating localization of KCNMA1 to the plasma membrane. Might also mediate palmitoylation of CNN3. The polypeptide is Palmitoyltransferase ZDHHC22 (Homo sapiens (Human)).